A 431-amino-acid chain; its full sequence is Pachytene checkpoint protein 2 homolog (431 aa).

At M1 the chain carries N-acetylmethionine. 179–186 lines the ATP pocket; sequence GPPGTGKT.

The protein belongs to the AAA ATPase family. PCH2 subfamily. Specifically interacts with the ligand binding domain of the thyroid receptor (TR). This interaction does not require the presence of thyroid hormone for its interaction. Interacts with proteasome subunit PSMA8; to participate in meiosis progression during spermatogenesis.

In terms of biological role, plays a key role in chromosome recombination and chromosome structure development during meiosis. Required at early steps in meiotic recombination that leads to non-crossovers pathways. Also needed for efficient completion of homologous synapsis by influencing crossover distribution along the chromosomes affecting both crossovers and non-crossovers pathways. Also required for development of higher-order chromosome structures and is needed for synaptonemal-complex formation. In males, required for efficient synapsis of the sex chromosomes and for sex body formation. Promotes early steps of the DNA double-strand breaks (DSBs) repair process upstream of the assembly of RAD51 complexes. Required for depletion of HORMAD1 and HORMAD2 from synapsed chromosomes. Plays a role in mitotic spindle assembly checkpoint (SAC) activation. In Sus scrofa (Pig), this protein is Pachytene checkpoint protein 2 homolog (TRIP13).